A 254-amino-acid polypeptide reads, in one-letter code: MNNVSMRELLEAGAHFGHRTRFWNPKMSEYIFGSRNKIHIINLEKTLPMLSDVTNYVSRLAANKAKILFVGTKRAAQDSIREHARRCGMPYVDHRWLGGMLTNYKTVRQSIFRLKELKEMKEKGLFNDMIKKEALMLTRELEKLERSLGGIENMGGLPDALFVVDVGFEHIAVEEARRLRIPVIGVVDTNNSPDNIDYVIPGNDDSMRAVDIYVRCVADAILDGKNSNTVGRVSSDSEFVEVTSNSNEEEKSGE.

The protein belongs to the universal ribosomal protein uS2 family.

The polypeptide is Small ribosomal subunit protein uS2 (Legionella pneumophila (strain Lens)).